The chain runs to 248 residues: Transcription factor cicD (248 aa).

Over residues 1–22 (MVGSRHPDQCAKRWHHSLDPNV) the composition is skewed to basic and acidic residues. The tract at residues 1–25 (MVGSRHPDQCAKRWHHSLDPNVKRG) is disordered. Residues 19–74 (DPNVKRGPWTMEEDSSLLEAVQKIGRDWKEIGRELFPSRSTTDIKNRYVILSRRRG) form the HTH myb-type domain. Residues 46–70 (WKEIGRELFPSRSTTDIKNRYVILS) constitute a DNA-binding region (H-T-H motif). The interval 186-208 (SELEGSFTSRNHEEPPQPLPVPD) is disordered.

The protein localises to the nucleus. Its function is as follows. Transcription factor that regulates the expression of the gene cluster that mediates the biosynthesis of cichorine, a phytotoxin active against knapweed, corn, and soybeans. This Emericella nidulans (strain FGSC A4 / ATCC 38163 / CBS 112.46 / NRRL 194 / M139) (Aspergillus nidulans) protein is Transcription factor cicD.